Consider the following 468-residue polypeptide: ATP synthase subunit beta (468 aa).

148–155 (GGAGVGKT) provides a ligand contact to ATP.

The protein belongs to the ATPase alpha/beta chains family. In terms of assembly, F-type ATPases have 2 components, CF(1) - the catalytic core - and CF(0) - the membrane proton channel. CF(1) has five subunits: alpha(3), beta(3), gamma(1), delta(1), epsilon(1). CF(0) has three main subunits: a(1), b(2) and c(9-12). The alpha and beta chains form an alternating ring which encloses part of the gamma chain. CF(1) is attached to CF(0) by a central stalk formed by the gamma and epsilon chains, while a peripheral stalk is formed by the delta and b chains.

The protein localises to the cell inner membrane. It catalyses the reaction ATP + H2O + 4 H(+)(in) = ADP + phosphate + 5 H(+)(out). In terms of biological role, produces ATP from ADP in the presence of a proton gradient across the membrane. The catalytic sites are hosted primarily by the beta subunits. This Xanthomonas campestris pv. campestris (strain 8004) protein is ATP synthase subunit beta.